The sequence spans 190 residues: HTH-type transcriptional repressor AcnR (190 aa).

In terms of domain architecture, HTH tetR-type spans 10–70 (SMRRQEILEG…ALAREDAARM (61 aa)). Residues 33–52 (TVRRLEETVGKSRGAIFHHF) constitute a DNA-binding region (H-T-H motif). Citrate contacts are provided by residues 79-80 (LV), R130, and N134. E181 contacts Mg(2+). Position 185 (R185) interacts with citrate.

In terms of assembly, homodimer.

Functionally, acnR negatively controls the expression of the aconitase gene acn. The sequence is that of HTH-type transcriptional repressor AcnR from Corynebacterium diphtheriae (strain ATCC 700971 / NCTC 13129 / Biotype gravis).